The sequence spans 57 residues: MPANQPPLYLTFLLLILLYLIITLYVWTILTINHKTAVRYAALYQRSCSRWGFDQSL.

The Virion surface segment spans residues 1-8; the sequence is MPANQPPL. Residues 9 to 29 traverse the membrane as a helical segment; the sequence is YLTFLLLILLYLIITLYVWTI. Residues 30–57 lie on the Intravirion side of the membrane; the sequence is LTINHKTAVRYAALYQRSCSRWGFDQSL.

It belongs to the rubulavirus small hydrophobic protein family. Interacts with host TNFRSF1A, RIPK1 and IRAK1; these interactions interfere with host NF-kappa-B activation at the level of receptor complexes. Interacts with host protein UBQLN4.

It is found in the virion membrane. The protein localises to the host cell membrane. Its function is as follows. Plays a role in the inhibition of the host NF-kappa-B pathway. This inhibition occurs at the receptor level, by preventing the signaling of TNFR1 as well as IL-1R and TLR3. In Homo sapiens (Human), this protein is Small hydrophobic protein (SH).